The primary structure comprises 73 residues: Putative membrane protein insertion efficiency factor (73 aa).

This sequence belongs to the UPF0161 family.

It is found in the cell inner membrane. Could be involved in insertion of integral membrane proteins into the membrane. The sequence is that of Putative membrane protein insertion efficiency factor from Neisseria meningitidis serogroup C / serotype 2a (strain ATCC 700532 / DSM 15464 / FAM18).